Reading from the N-terminus, the 181-residue chain is Small ribosomal subunit protein uS4 (181 aa).

Positions 106–168 (RRLQTLVYRK…PTSRIVKAKV (63 aa)) constitute an S4 RNA-binding domain.

The protein belongs to the universal ribosomal protein uS4 family. As to quaternary structure, part of the 30S ribosomal subunit. Contacts protein S5. The interaction surface between S4 and S5 is involved in control of translational fidelity.

Functionally, one of the primary rRNA binding proteins, it binds directly to 16S rRNA where it nucleates assembly of the body of the 30S subunit. Its function is as follows. With S5 and S12 plays an important role in translational accuracy. In Caldivirga maquilingensis (strain ATCC 700844 / DSM 13496 / JCM 10307 / IC-167), this protein is Small ribosomal subunit protein uS4.